We begin with the raw amino-acid sequence, 355 residues long: MSRSNPPNPTGSRKISFNVSEQYDIQDVVGEGAYGVVCSAIHKPSGQKVAIKKITPFDHSMFCLRTLREMKLLRYFNHENIISILDIQKPRNYESFNEVYLIQELMETDMHRAIRTQDLSDDHCQYFIYQTLRALKAMHSANVLHRDLKPSNLLLNANCDLKVCDFGLARSAASQEDNSGFMTEYVATRWYRAPEIMLTFKEYTKAIDVWSVGCILAEMLSGKPLFPGKDYHHQLTLILDVLGTPTMEDYYGIKSRRAREYIRSLPFKKKVPFRTLFPKTSDLALDLLEKLLAFNPVKRITVEEALKHPYLEPYHDPEDEPTAPPIPEEFFDFDKHKDNLSKEQLKQLIYQEIMR.

The Protein kinase domain maps to 23–311 (YDIQDVVGEG…VEEALKHPYL (289 aa)). ATP contacts are provided by residues 29-37 (VGEGAYGVV) and Lys-52. Catalysis depends on Asp-147, which acts as the Proton acceptor. Thr-183 carries the post-translational modification Phosphothreonine. The TXY motif lies at 183–185 (TEY). Residue Tyr-185 is modified to Phosphotyrosine.

The protein belongs to the protein kinase superfamily. CMGC Ser/Thr protein kinase family. MAP kinase subfamily. In terms of processing, dually phosphorylated on Thr-183 and Tyr-185, which activates the enzyme.

The protein localises to the nucleus. It catalyses the reaction L-seryl-[protein] + ATP = O-phospho-L-seryl-[protein] + ADP + H(+). It carries out the reaction L-threonyl-[protein] + ATP = O-phospho-L-threonyl-[protein] + ADP + H(+). With respect to regulation, activated by tyrosine and threonine phosphorylation. Responds to activation by environmental stress by phosphorylating downstream targets. The chain is Mitogen-activated protein kinase (MAPK) from Fusarium vanettenii (Neocosmospora pisi).